The primary structure comprises 753 residues: Inactive protein-tyrosine phosphatase egg-5 (753 aa).

Disordered stretches follow at residues 26-46 (TSLQSFCSGNTDDSSADSTDN) and 77-116 (RKKVKKLAQKDRRSKERLNGNSEEDAIEVPRGAPSTYAAP). The span at 35-46 (NTDDSSADSTDN) shows a compositional bias: low complexity. The span at 84–94 (AQKDRRSKERL) shows a compositional bias: basic and acidic residues. One can recognise a Tyrosine-protein phosphatase domain in the interval 408-661 (MERRFEILEN…IFVHRLVAFF (254 aa)).

The protein belongs to the protein-tyrosine phosphatase family. As to quaternary structure, part of a complex, consisting of pseudophosphatases egg-3, egg-4, egg-5 and kinase mbk-2; this complex is required for the oocyte-to-zygote transition. Interacts (via tyrosine-protein phosphatase domain) with kinase mbk-2 (via 'Tyr-619' and 'Tyr-621'); mbk-2 tyrosine phosphorylation enhances the interaction.

The protein localises to the cytoplasm. It is found in the cell cortex. Its function is as follows. Inactive phosphatase which acts redundantly with egg-4 in the oocyte-to-zygote transition. Required for polarized cortical actin cytoskeleton rearrangement in the oocyte before and after fertilization. Together with egg-4, required for the cortical localization of kinase mbk-2 in maturing oocyte until the end of meiosis I. Also required for kinase mbk-2, pseudophosphatase egg-3 and chitin synthase chs-1 localization to cytoplasmic foci after fertilization. The sequence is that of Inactive protein-tyrosine phosphatase egg-5 from Caenorhabditis elegans.